The sequence spans 620 residues: Glutathione-regulated potassium-efflux system protein KefC (620 aa).

A run of 12 helical transmembrane segments spans residues H4–V24, L26–L46, S54–L74, G90–L110, V114–M134, F149–L169, L178–L198, V218–G238, G270–V290, L294–V314, W327–Q347, and A359–T379. Positions Q399–T518 constitute an RCK N-terminal domain. Positions Q599 to I620 are disordered.

Belongs to the monovalent cation:proton antiporter 2 (CPA2) transporter (TC 2.A.37) family. KefC subfamily. Homodimer. Interacts with the regulatory subunit KefF.

It is found in the cell inner membrane. Functionally, pore-forming subunit of a potassium efflux system that confers protection against electrophiles. Catalyzes K(+)/H(+) antiport. The sequence is that of Glutathione-regulated potassium-efflux system protein KefC from Salmonella heidelberg (strain SL476).